The sequence spans 324 residues: Coproporphyrin III ferrochelatase (324 aa).

Fe(2+) contacts are provided by histidine 184 and glutamate 266.

The protein belongs to the ferrochelatase family.

The protein resides in the cytoplasm. The catalysed reaction is Fe-coproporphyrin III + 2 H(+) = coproporphyrin III + Fe(2+). It participates in porphyrin-containing compound metabolism; protoheme biosynthesis. In terms of biological role, involved in coproporphyrin-dependent heme b biosynthesis. Catalyzes the insertion of ferrous iron into coproporphyrin III to form Fe-coproporphyrin III. The sequence is that of Coproporphyrin III ferrochelatase from Lactiplantibacillus plantarum (strain ATCC BAA-793 / NCIMB 8826 / WCFS1) (Lactobacillus plantarum).